The chain runs to 230 residues: Ion-translocating oxidoreductase complex subunit E (230 aa).

A run of 6 helical transmembrane segments spans residues 18–38 (ALVQ…ITNA), 39–59 (LGLG…VSLI), 69–89 (IPVF…LMNA), 93–113 (GLYL…IIIG), 124–144 (VLPA…VLVV), and 182–202 (SFLL…LIAL).

Belongs to the NqrDE/RnfAE family. In terms of assembly, the complex is composed of six subunits: RnfA, RnfB, RnfC, RnfD, RnfE and RnfG.

Its subcellular location is the cell inner membrane. Part of a membrane-bound complex that couples electron transfer with translocation of ions across the membrane. The sequence is that of Ion-translocating oxidoreductase complex subunit E from Vibrio parahaemolyticus serotype O3:K6 (strain RIMD 2210633).